A 538-amino-acid chain; its full sequence is Cytochrome c-552 (538 aa).

The first 55 residues, 1-55 (MKIYLRFVWILIIILNFLLNLFITTNGVIIVNAFKKSLIVAASFASLSLFNSATA), serve as a signal peptide directing secretion. His-133 lines the heme c pocket. The heme site is built by Cys-161, Cys-164, and Lys-165. Residues Cys-199, Cys-202, His-203, Cys-264, Cys-267, and His-268 each coordinate heme c. Ca(2+) is bound by residues Glu-270, Tyr-271, Lys-316, and Gln-318. Tyr-271 is a binding site for substrate. Substrate is bound at residue His-319. Residues His-330, Cys-337, Cys-340, His-341, His-356, Cys-369, Cys-372, His-373, and His-448 each coordinate heme c.

Belongs to the cytochrome c-552 family. The cofactor is Ca(2+). Requires heme c as cofactor.

The protein localises to the periplasm. It catalyses the reaction 6 Fe(III)-[cytochrome c] + NH4(+) + 2 H2O = 6 Fe(II)-[cytochrome c] + nitrite + 8 H(+). Its pathway is nitrogen metabolism; nitrate reduction (assimilation). In terms of biological role, catalyzes the reduction of nitrite to ammonia, consuming six electrons in the process. This is Cytochrome c-552 from Haemophilus influenzae (strain ATCC 51907 / DSM 11121 / KW20 / Rd).